A 92-amino-acid chain; its full sequence is Small ribosomal subunit protein uS19 (92 aa).

Belongs to the universal ribosomal protein uS19 family.

Protein S19 forms a complex with S13 that binds strongly to the 16S ribosomal RNA. This is Small ribosomal subunit protein uS19 from Crocosphaera subtropica (strain ATCC 51142 / BH68) (Cyanothece sp. (strain ATCC 51142)).